Consider the following 97-residue polypeptide: Histone H1.C2 (97 aa).

The interval 24–97 (AAVPPKKAAP…KKAVKKAPKK (74 aa)) is disordered. Positions 31–97 (AAPKKAVAKK…KKAVKKAPKK (67 aa)) are enriched in basic residues.

It localises to the nucleus. The protein resides in the chromosome. This is Histone H1.C2 from Trypanosoma cruzi.